The sequence spans 235 residues: UPF0749 protein YlxX (235 aa).

A helical transmembrane segment spans residues 6 to 26; that stretch reads SFISISVLMVIFGLMISVQFN.

This sequence belongs to the UPF0749 family.

It is found in the cell membrane. In Bacillus subtilis (strain 168), this protein is UPF0749 protein YlxX (ylxX).